The primary structure comprises 292 residues: Histamine N-methyltransferase (292 aa).

Glu28 contributes to the substrate binding site. Gly60, Glu89, Gln94, Ser120, and Ile142 together coordinate S-adenosyl-L-methionine. Residue Asn283 coordinates substrate.

It belongs to the class I-like SAM-binding methyltransferase superfamily. HNMT family. As to quaternary structure, monomer.

The protein resides in the cytoplasm. The catalysed reaction is histamine + S-adenosyl-L-methionine = N(tau)-methylhistamine + S-adenosyl-L-homocysteine + H(+). In terms of biological role, inactivates histamine by N-methylation. Plays an important role in degrading histamine and in regulating the airway response to histamine. This is Histamine N-methyltransferase (HNMT) from Homo sapiens (Human).